The following is a 289-amino-acid chain: ATP synthase gamma chain (289 aa).

It belongs to the ATPase gamma chain family. In terms of assembly, F-type ATPases have 2 components, CF(1) - the catalytic core - and CF(0) - the membrane proton channel. CF(1) has five subunits: alpha(3), beta(3), gamma(1), delta(1), epsilon(1). CF(0) has three main subunits: a, b and c.

The protein localises to the cell membrane. Functionally, produces ATP from ADP in the presence of a proton gradient across the membrane. The gamma chain is believed to be important in regulating ATPase activity and the flow of protons through the CF(0) complex. This Lawsonia intracellularis (strain PHE/MN1-00) protein is ATP synthase gamma chain.